The sequence spans 151 residues: MTDLSIAVTRLPHGADLPLPAYATEHAAGMDLLAAVAEPVILAPGERRLIPTGLAIALPDGYEAQVRPRSGLALKHGITLLNSPGTIDADYRGEVGVILANLGADPFTVERGMRIAQMVIARYARAAWDVVDSLPASARGSGGFGSTGTRG.

Residues 69–71 (RSG), Asn82, and 86–88 (TID) each bind substrate.

Belongs to the dUTPase family. Requires Mg(2+) as cofactor.

It catalyses the reaction dUTP + H2O = dUMP + diphosphate + H(+). The protein operates within pyrimidine metabolism; dUMP biosynthesis; dUMP from dCTP (dUTP route): step 2/2. This enzyme is involved in nucleotide metabolism: it produces dUMP, the immediate precursor of thymidine nucleotides and it decreases the intracellular concentration of dUTP so that uracil cannot be incorporated into DNA. The chain is Deoxyuridine 5'-triphosphate nucleotidohydrolase from Rhodospirillum centenum (strain ATCC 51521 / SW).